Reading from the N-terminus, the 498-residue chain is Angiopoietin-1 (498 aa).

The signal sequence occupies residues M1–T15. Positions Q81–A119 form a coiled coil. Residues N92, N122, N154, N243, and N295 are each glycosylated (N-linked (GlcNAc...) asparagine). A coiled-coil region spans residues L153 to L261. Residues R277–D497 enclose the Fibrinogen C-terminal domain. 2 cysteine pairs are disulfide-bonded: C286-C315 and C439-C452.

Homooligomer. Interacts with TEK/TIE2. Interacts with SVEP1/polydom. Interacts with THBD; this interaction significantly inhibits the generation of activated PC and TAFIa/CPB2 by the thrombin/thrombomodulin complex. Glycosylated.

It is found in the secreted. In terms of biological role, binds and activates TEK/TIE2 receptor by inducing its dimerization and tyrosine phosphorylation. Plays an important role in the regulation of angiogenesis, endothelial cell survival, proliferation, migration, adhesion and cell spreading, reorganization of the actin cytoskeleton, but also maintenance of vascular quiescence. Required for normal angiogenesis and heart development during embryogenesis. After birth, activates or inhibits angiogenesis, depending on the context. Inhibits angiogenesis and promotes vascular stability in quiescent vessels, where endothelial cells have tight contacts. In quiescent vessels, ANGPT1 oligomers recruit TEK to cell-cell contacts, forming complexes with TEK molecules from adjoining cells, and this leads to preferential activation of phosphatidylinositol 3-kinase and the AKT1 signaling cascades. In migrating endothelial cells that lack cell-cell adhesions, ANGT1 recruits TEK to contacts with the extracellular matrix, leading to the formation of focal adhesion complexes, activation of PTK2/FAK and of the downstream kinases MAPK1/ERK2 and MAPK3/ERK1, and ultimately to the stimulation of sprouting angiogenesis. Mediates blood vessel maturation/stability. Implicated in endothelial developmental processes later and distinct from that of VEGF. Appears to play a crucial role in mediating reciprocal interactions between the endothelium and surrounding matrix and mesenchyme. The protein is Angiopoietin-1 (ANGPT1) of Homo sapiens (Human).